Consider the following 705-residue polypeptide: Elongation factor G (705 aa).

Residues 8–290 (ERYRNFGIMA…GVVHLLPSPA (283 aa)) form the tr-type G domain. Residues 17–24 (AHIDAGKT), 88–92 (DTPGH), and 142–145 (NKMD) each bind GTP. Residues 290–309 (ADRPPVQGIDENEKEDTRDA) are disordered.

The protein belongs to the TRAFAC class translation factor GTPase superfamily. Classic translation factor GTPase family. EF-G/EF-2 subfamily.

The protein localises to the cytoplasm. Its function is as follows. Catalyzes the GTP-dependent ribosomal translocation step during translation elongation. During this step, the ribosome changes from the pre-translocational (PRE) to the post-translocational (POST) state as the newly formed A-site-bound peptidyl-tRNA and P-site-bound deacylated tRNA move to the P and E sites, respectively. Catalyzes the coordinated movement of the two tRNA molecules, the mRNA and conformational changes in the ribosome. The chain is Elongation factor G from Xanthomonas campestris pv. campestris (strain 8004).